A 72-amino-acid chain; its full sequence is Variant surface glycoprotein MITAT 1.1000BC (72 aa).

Asp-50 is lipidated: GPI-anchor amidated aspartate. Residues 51 to 72 (GSFLVNKKFALMVYDFVSLLAF) constitute a propeptide, removed in mature form.

The protein localises to the cell membrane. Functionally, VSG forms a coat on the surface of the parasite. The trypanosome evades the immune response of the host by expressing a series of antigenically distinct VSGs from an estimated 1000 VSG genes. In Trypanosoma brucei brucei, this protein is Variant surface glycoprotein MITAT 1.1000BC.